A 214-amino-acid polypeptide reads, in one-letter code: Thymidylate kinase (214 aa).

10–17 is a binding site for ATP; that stretch reads GGEGAGKS.

This sequence belongs to the thymidylate kinase family.

It carries out the reaction dTMP + ATP = dTDP + ADP. Functionally, phosphorylation of dTMP to form dTDP in both de novo and salvage pathways of dTTP synthesis. This is Thymidylate kinase from Brucella canis (strain ATCC 23365 / NCTC 10854 / RM-666).